The primary structure comprises 248 residues: DNA-directed RNA polymerase subunit Rpo3 (248 aa).

It belongs to the archaeal Rpo3/eukaryotic RPB3 RNA polymerase subunit family. Part of the RNA polymerase complex.

The protein localises to the cytoplasm. The catalysed reaction is RNA(n) + a ribonucleoside 5'-triphosphate = RNA(n+1) + diphosphate. Its function is as follows. DNA-dependent RNA polymerase (RNAP) catalyzes the transcription of DNA into RNA using the four ribonucleoside triphosphates as substrates. The chain is DNA-directed RNA polymerase subunit Rpo3 from Halobacterium salinarum (strain ATCC 29341 / DSM 671 / R1).